The sequence spans 323 residues: Aspartate carbamoyltransferase catalytic subunit (323 aa).

Residues Arg-55 and Thr-56 each contribute to the carbamoyl phosphate site. Position 83 (Lys-83) interacts with L-aspartate. Carbamoyl phosphate contacts are provided by Arg-105, His-133, and Gln-136. Residues Arg-166 and Arg-220 each coordinate L-aspartate. Residues Gly-261 and Pro-262 each coordinate carbamoyl phosphate.

The protein belongs to the aspartate/ornithine carbamoyltransferase superfamily. ATCase family. Heterododecamer (2C3:3R2) of six catalytic PyrB chains organized as two trimers (C3), and six regulatory PyrI chains organized as three dimers (R2).

It catalyses the reaction carbamoyl phosphate + L-aspartate = N-carbamoyl-L-aspartate + phosphate + H(+). The protein operates within pyrimidine metabolism; UMP biosynthesis via de novo pathway; (S)-dihydroorotate from bicarbonate: step 2/3. In terms of biological role, catalyzes the condensation of carbamoyl phosphate and aspartate to form carbamoyl aspartate and inorganic phosphate, the committed step in the de novo pyrimidine nucleotide biosynthesis pathway. The sequence is that of Aspartate carbamoyltransferase catalytic subunit from Acidothermus cellulolyticus (strain ATCC 43068 / DSM 8971 / 11B).